We begin with the raw amino-acid sequence, 346 residues long: Acrosin (346 aa).

A signal peptide spans 1–19; it reads MALLLPLAVLLAACRPGHG. 6 disulfide bridges follow: cysteine 24–cysteine 146, cysteine 27–cysteine 154, cysteine 70–cysteine 86, cysteine 168–cysteine 240, cysteine 203–cysteine 219, and cysteine 230–cysteine 260. Positions 41–284 constitute a Peptidase S1 domain; sequence VVGGTEALHG…FYNWILLQVR (244 aa). The active-site Charge relay system is histidine 85. Asparagine 128 is a glycosylation site (N-linked (GlcNAc...) asparagine). Catalysis depends on aspartate 134, which acts as the Charge relay system. The N-linked (GlcNAc...) asparagine glycan is linked to asparagine 204. The Charge relay system role is filled by serine 234. The propeptide occupies 266-346; it reads PGIYTSTQHF…LLQSLWGSKA (81 aa).

Belongs to the peptidase S1 family. As to quaternary structure, heavy chain (catalytic) and a light chain linked by two disulfide bonds. Post-translationally, glycosylated.

The enzyme catalyses Preferential cleavage: Arg-|-Xaa, Lys-|-Xaa.. Its activity is regulated as follows. Inhibited by aprotinin, ovomucoid, soybean trypsin inhibitor, benzamidine, p-aminobenzamidine, and zinc ions. Activity also inhibited by a Kazal-type proteinase inhibitor. Functionally, serine protease of trypsin-like cleavage specificity. Synthesized in a zymogen form, proacrosin and stored in the acrosome. The sequence is that of Acrosin from Meleagris gallopavo (Wild turkey).